The primary structure comprises 96 residues: Large ribosomal subunit protein bL21 (96 aa).

It belongs to the bacterial ribosomal protein bL21 family. In terms of assembly, part of the 50S ribosomal subunit. Contacts protein L20.

Functionally, this protein binds to 23S rRNA in the presence of protein L20. The protein is Large ribosomal subunit protein bL21 of Prosthecochloris aestuarii (strain DSM 271 / SK 413).